Consider the following 1051-residue polypeptide: Eukaryotic translation initiation factor 3 subunit A (1051 aa).

Residues 92–121 are a coiled coil; that stretch reads LKKFIELAEKKVTEAQAKADEIQSSLESAA. A PCI domain is found at 339–523; the sequence is MTKAASFVLL…GVLTFDTDIF (185 aa). The stretch at 608 to 905 forms a coiled coil; that stretch reads RVLIEKKKEA…EAEARRAARK (298 aa). Basic and acidic residues-rich tracts occupy residues 617-632, 642-664, 794-901, and 916-926; these read AATD…EETR, EAEK…RDEQ, KEVS…EARR, and AELERPVERTA. 2 disordered regions span residues 617–664 and 794–1051; these read AATD…RDEQ and KEVS…QQQQ. 2 stretches are compositionally biased toward low complexity: residues 948–961 and 1010–1039; these read KEAA…AAAE and SSSS…SPAP.

The protein belongs to the eIF-3 subunit A family. Component of the eukaryotic translation initiation factor 3 (eIF-3) complex.

The protein localises to the cytoplasm. Functionally, RNA-binding component of the eukaryotic translation initiation factor 3 (eIF-3) complex, which is involved in protein synthesis of a specialized repertoire of mRNAs and, together with other initiation factors, stimulates binding of mRNA and methionyl-tRNAi to the 40S ribosome. The eIF-3 complex specifically targets and initiates translation of a subset of mRNAs involved in cell proliferation. The sequence is that of Eukaryotic translation initiation factor 3 subunit A (tif32) from Aspergillus fumigatus (strain CBS 144.89 / FGSC A1163 / CEA10) (Neosartorya fumigata).